We begin with the raw amino-acid sequence, 743 residues long: Sulfhydryl oxidase 1 (743 aa).

Positions 1-42 (MWRRRARSGGGGGGGGGGAAPRCRWWPAVLALLAAALPAARS) are cleaved as a signal peptide. A Thioredoxin domain is found at 43 to 166 (RSLYSPSDPL…LRRAIITNLE (124 aa)). Active-site nucleophile residues include Cys-80 and Cys-83. Cystine bridges form between Cys-80–Cys-83 and Cys-111–Cys-120. 5 N-linked (GlcNAc...) asparagine glycosylation sites follow: Asn-254, Asn-288, Asn-295, Asn-371, and Asn-401. A disulfide bridge links Cys-407 with Cys-419. The ERV/ALR sulfhydryl oxidase domain maps to 410-513 (SEPHFRGYPC…EDPQFPKLQW (104 aa)). Residues Arg-415, Trp-422, His-426, Glu-461, His-465, 488–495 (WSHHNEVN), Lys-510, and Trp-513 contribute to the FAD site. Residues Cys-459 and Cys-462 are joined by a disulfide bond. The cysteines at positions 519 and 522 are disulfide-linked. Residues 567–617 (ASARLSTAGLREKEEEERKEEEEEGEKETEKPHREGETGRPGSSELRRPSI) form a disordered region. A compositionally biased stretch (acidic residues) spans 580-593 (EEEERKEEEEEGEK). The segment covering 594–604 (ETEKPHREGET) has biased composition (basic and acidic residues). A helical membrane pass occupies residues 707–727 (SLCIALYFLSSMCLLGMYTFF).

This sequence belongs to the quiescin-sulfhydryl oxidase (QSOX) family. Requires FAD as cofactor. N-glycosylated. O-glycosylated on Thr and Ser residues.

The protein localises to the golgi apparatus membrane. It is found in the secreted. The enzyme catalyses 2 R'C(R)SH + O2 = R'C(R)S-S(R)CR' + H2O2. In terms of biological role, catalyzes the oxidation of sulfhydryl groups in peptide and protein thiols to disulfides with the reduction of oxygen to hydrogen peroxide. Plays a role in disulfide bond formation in a variety of extracellular proteins. In fibroblasts, required for normal incorporation of laminin into the extracellular matrix, and thereby for normal cell-cell adhesion and cell migration. In Gallus gallus (Chicken), this protein is Sulfhydryl oxidase 1 (QSOX1).